The chain runs to 87 residues: Putative defensin-like protein 304 (87 aa).

The signal sequence occupies residues 1–19 (MKSNKVTFFLGLFLVSAFC). Disulfide bonds link Cys-27-Cys-46, Cys-33-Cys-51, and Cys-40-Cys-53.

The protein belongs to the DEFL family.

It is found in the secreted. The polypeptide is Putative defensin-like protein 304 (Arabidopsis thaliana (Mouse-ear cress)).